A 208-amino-acid chain; its full sequence is Uracil phosphoribosyltransferase (208 aa).

5-phospho-alpha-D-ribose 1-diphosphate-binding positions include Arg-78, Arg-103, and 130 to 138 (DPMLATGGS). Residues Ile-193 and 198 to 200 (GDA) each bind uracil. Asp-199 is a 5-phospho-alpha-D-ribose 1-diphosphate binding site.

Belongs to the UPRTase family. The cofactor is Mg(2+).

It catalyses the reaction UMP + diphosphate = 5-phospho-alpha-D-ribose 1-diphosphate + uracil. It participates in pyrimidine metabolism; UMP biosynthesis via salvage pathway; UMP from uracil: step 1/1. With respect to regulation, allosterically activated by GTP. Its function is as follows. Catalyzes the conversion of uracil and 5-phospho-alpha-D-ribose 1-diphosphate (PRPP) to UMP and diphosphate. This Yersinia enterocolitica serotype O:8 / biotype 1B (strain NCTC 13174 / 8081) protein is Uracil phosphoribosyltransferase.